A 308-amino-acid chain; its full sequence is GTP-binding protein RAD (308 aa).

Residues 1–16 (MTLNGGGSGAGGSRGG) are compositionally biased toward gly residues. A disordered region spans residues 1–88 (MTLNGGGSGA…SLSSGGSDSD (88 aa)). An Omega-N-methylarginine modification is found at Arg-24. A Phosphoserine modification is found at Ser-26. Residues 48–68 (QAALTPGALTAAAAGTGTQGP) are compositionally biased toward low complexity. GTP-binding positions include 98–105 (GAPGVGKS) and 203–206 (NKSD). The calmodulin-binding stretch occupies residues 278 to 297 (AKRFLGRIVARNSRKMAFRA).

This sequence belongs to the small GTPase superfamily. RGK family. Interacts with calmodulin preferentially in the inactive, GDP-bound form. Binds CAMKII which is capable of phosphorylating RAD in vitro. Interacts with CAMK2D. Interacts with CACNB2; interaction may be involved in beta-adrenergic regulation of heart rate and contractile force. Interaction with CACNB2 regulates the trafficking of CACNA1C to the cell membrane. Most abundantly expressed in the heart. Also found in the skeletal muscle and lung. Lesser amounts in placenta and kidney. Also detected in adipose tissue. Overexpressed in muscle of type II diabetic humans.

It is found in the cell membrane. Its function is as follows. May regulate basal voltage-dependent L-type Ca(2+) currents and be required for beta-adrenergic augmentation of Ca(2+) influx in cardiomyocytes, thereby regulating increases in heart rate and contractile force. May play an important role in cardiac antiarrhythmia via the strong suppression of voltage-gated L-type Ca(2+) currents. Regulates voltage-dependent L-type calcium channel subunit alpha-1C trafficking to the cell membrane. Inhibits cardiac hypertrophy through the calmodulin-dependent kinase II (CaMKII) pathway. Inhibits phosphorylation and activation of CAMK2D. The protein is GTP-binding protein RAD (RRAD) of Homo sapiens (Human).